The primary structure comprises 942 residues: Inter alpha-trypsin inhibitor, heavy chain 4 (942 aa).

The signal sequence occupies residues 1–28 (MKSPAPAHMWNLVLFLPSLLAVLPTTTA). In terms of domain architecture, VIT spans 29 to 148 (EKNGIDIYSL…KITFELIYQE (120 aa)). N-linked (GlcNAc...) asparagine glycosylation is present at N81. The VWFA domain occupies 274–457 (NVIFVIDKSG…LQLQDFYHEV (184 aa)). N-linked (GlcNAc...) asparagine glycosylation is found at N517 and N577. A coiled-coil region spans residues 552 to 586 (TIQQQLEQRISASGAELEALEAQVLNLSLKYNFVT). 2 disordered regions span residues 658–698 (RQYI…SDFS) and 726–745 (EKSK…HPQV). The span at 663 to 690 (PGFPGPPGPPGFPAPPGPPGFPAPPGPP) shows a compositional bias: pro residues. O-linked (GalNAc...) threonine glycosylation occurs at T732. A disulfide bridge links C761 with C937. An N-linked (GlcNAc...) asparagine glycan is attached at N874.

The protein belongs to the ITIH family. In terms of assembly, interacts (via C-terminus) with DNAJC1 (via SANT 2 domain). Post-translationally, may be O-glycosylated. N-glycosylated. In terms of tissue distribution, highly expressed in liver. Weak expression in lung and heart.

The protein localises to the secreted. Type II acute-phase protein (APP) involved in inflammatory responses to trauma. May also play a role in liver development or regeneration. The sequence is that of Inter alpha-trypsin inhibitor, heavy chain 4 (Itih4) from Mus musculus (Mouse).